The chain runs to 236 residues: Pyridoxal 5'-phosphate synthase subunit PdxT (236 aa).

L-glutamine is bound at residue 61–63; sequence GES. The Nucleophile role is filled by C93. Residues R127 and 163–164 each bind L-glutamine; that span reads IR. Active-site charge relay system residues include H215 and E217.

Belongs to the glutaminase PdxT/SNO family. In the presence of PdxS, forms a dodecamer of heterodimers. Only shows activity in the heterodimer.

It catalyses the reaction aldehydo-D-ribose 5-phosphate + D-glyceraldehyde 3-phosphate + L-glutamine = pyridoxal 5'-phosphate + L-glutamate + phosphate + 3 H2O + H(+). It carries out the reaction L-glutamine + H2O = L-glutamate + NH4(+). It participates in cofactor biosynthesis; pyridoxal 5'-phosphate biosynthesis. Its function is as follows. Catalyzes the hydrolysis of glutamine to glutamate and ammonia as part of the biosynthesis of pyridoxal 5'-phosphate. The resulting ammonia molecule is channeled to the active site of PdxS. The polypeptide is Pyridoxal 5'-phosphate synthase subunit PdxT (Pseudarthrobacter chlorophenolicus (strain ATCC 700700 / DSM 12829 / CIP 107037 / JCM 12360 / KCTC 9906 / NCIMB 13794 / A6) (Arthrobacter chlorophenolicus)).